The sequence spans 642 residues: Cylicin-1 (642 aa).

Disordered stretches follow at residues 167 to 203 and 284 to 607; these read NGEPEILGNTEKNPSKSSHKIKLPKTSNSTSETNLEY and NCSQ…CEPF. Residues 191-203 show a composition bias toward polar residues; it reads KTSNSTSETNLEY. A run of 8 repeats spans residues 294 to 313, 314 to 344, 345 to 391, 392 to 432, 433 to 464, 465 to 500, 501 to 526, and 527 to 543. Residues 298–316 show a composition bias toward basic and acidic residues; that stretch reads GKKERDSDIDSGGSKDAKK. The segment covering 317–330 has biased composition (basic residues); the sequence is EGKKKGKRESRKKR. A compositionally biased stretch (basic and acidic residues) spans 353 to 364; sequence KKNEIKKKKDTD. Low complexity predominate over residues 388-404; sequence KKSTGSTGSESVDSKST. Basic residues predominate over residues 405–416; the sequence is NKVKKQVKKGVM. Residues 428-440 are compositionally biased toward basic and acidic residues; that stretch reads ASSKKSKKDEKKE. Acidic residues predominate over residues 454–463; it reads STDADSESEG. Over residues 465–488 the composition is skewed to basic and acidic residues; sequence STGKKNEKKDKKITKKGEKKDAKK. The segment covering 513–523 has biased composition (low complexity); the sequence is SFSDSTSDSYS. The interval 527–543 is 8 X approximate tandem repeats; it reads RRKNVRRSDSESEDSSG.

In terms of assembly, interacts with proteins of spermatozoa head including ACTL7A, CCIN, FAM209 and SPACA1; the interactions may be necessary for proper acrosome attachment to the nuclear envelope. Testis.

It is found in the cytoplasm. Its subcellular location is the cytoskeleton. The protein resides in the perinuclear theca. The protein localises to the calyx. Plays a role in the establishment of normal sperm morphology during spermatogenesis and is required for acrosome attachment to the nuclear envelope. The sequence is that of Cylicin-1 from Mus musculus (Mouse).